We begin with the raw amino-acid sequence, 270 residues long: 3-phenylpropionate-dihydrodiol/cinnamic acid-dihydrodiol dehydrogenase (270 aa).

10–34 (FITGGGSGLGLALVERFIEKGAQVA) contributes to the NAD(+) binding site. Substrate is bound at residue Ser143. The Proton acceptor role is filled by Tyr156.

The protein belongs to the short-chain dehydrogenases/reductases (SDR) family.

It catalyses the reaction 3-(cis-5,6-dihydroxycyclohexa-1,3-dien-1-yl)propanoate + NAD(+) = 3-(2,3-dihydroxyphenyl)propanoate + NADH + H(+). The catalysed reaction is (2E)-3-(cis-5,6-dihydroxycyclohexa-1,3-dien-1-yl)prop-2-enoate + NAD(+) = (2E)-3-(2,3-dihydroxyphenyl)prop-2-enoate + NADH + H(+). It participates in aromatic compound metabolism; 3-phenylpropanoate degradation. Functionally, converts 3-phenylpropionate-dihydrodiol (PP-dihydrodiol) and cinnamic acid-dihydrodiol (CI-dihydrodiol) into 3-(2,3-dihydroxylphenyl)propanoic acid (DHPP) and 2,3-dihydroxicinnamic acid (DHCI), respectively. This Escherichia coli protein is 3-phenylpropionate-dihydrodiol/cinnamic acid-dihydrodiol dehydrogenase (hcaB).